Reading from the N-terminus, the 186-residue chain is Methyl-CpG-binding domain-containing protein 4 (186 aa).

The segment at 22–77 adopts a CW-type zinc-finger fold; sequence GRLIDTYAAQCDNCHKWRVIDSQEEYEDIRSKMLEDPFNCQKKQGMSCEEPADIDY. Residues 31–69 carry the MBD-associated domain (MAD) motif; the sequence is QCDNCHKWRVIDSQEEYEDIRSKMLEDPFNCQKKQGMSC. Positions 32, 35, 61, and 69 each coordinate Zn(2+). One can recognise an MBD domain in the interval 83 to 153; that stretch reads WVIDKPGLPK…GDFNFTVPKV (71 aa). Positions 154 to 186 are disordered; it reads MEDTVPPDPKLGSPFPSTTTTTSEKSSVKQSHN. The span at 166–178 shows a compositional bias: low complexity; that stretch reads SPFPSTTTTTSEK.

In terms of tissue distribution, expressed in rosette leaves, buds, flowers, stems, mature seeds and roots.

It localises to the nucleus. In terms of biological role, transcriptional regulator that binds CpG, CpNpN and CpNpG (N is A, T, or C) islands in promoters regardless the DNA methylation status. Plays probably a role in gene silencing. The protein is Methyl-CpG-binding domain-containing protein 4 (MBD4) of Arabidopsis thaliana (Mouse-ear cress).